Here is a 131-residue protein sequence, read N- to C-terminus: Acidic leucine-rich nuclear phosphoprotein 32 family member D (131 aa).

5 LRR repeats span residues 18 to 38 (DVKE…EGLT), 43 to 64 (ELEL…PKLN), 65 to 87 (KLKK…AEKC), 89 to 110 (NLIH…EPLK), and 114 to 131 (NLES…LNNY).

The protein belongs to the ANP32 family.

The protein is Acidic leucine-rich nuclear phosphoprotein 32 family member D (ANP32D) of Homo sapiens (Human).